The primary structure comprises 248 residues: Ubiquinone/menaquinone biosynthesis C-methyltransferase UbiE (248 aa).

2 residues coordinate S-adenosyl-L-methionine: S68 and D92.

It belongs to the class I-like SAM-binding methyltransferase superfamily. MenG/UbiE family.

It catalyses the reaction a 2-demethylmenaquinol + S-adenosyl-L-methionine = a menaquinol + S-adenosyl-L-homocysteine + H(+). The catalysed reaction is a 2-methoxy-6-(all-trans-polyprenyl)benzene-1,4-diol + S-adenosyl-L-methionine = a 5-methoxy-2-methyl-3-(all-trans-polyprenyl)benzene-1,4-diol + S-adenosyl-L-homocysteine + H(+). It participates in quinol/quinone metabolism; menaquinone biosynthesis; menaquinol from 1,4-dihydroxy-2-naphthoate: step 2/2. The protein operates within cofactor biosynthesis; ubiquinone biosynthesis. Its function is as follows. Methyltransferase required for the conversion of demethylmenaquinol (DMKH2) to menaquinol (MKH2) and the conversion of 2-polyprenyl-6-methoxy-1,4-benzoquinol (DDMQH2) to 2-polyprenyl-3-methyl-6-methoxy-1,4-benzoquinol (DMQH2). This Rickettsia bellii (strain OSU 85-389) protein is Ubiquinone/menaquinone biosynthesis C-methyltransferase UbiE.